The sequence spans 413 residues: Gamma-glutamyl phosphate reductase (413 aa).

It belongs to the gamma-glutamyl phosphate reductase family.

The protein resides in the cytoplasm. The catalysed reaction is L-glutamate 5-semialdehyde + phosphate + NADP(+) = L-glutamyl 5-phosphate + NADPH + H(+). It functions in the pathway amino-acid biosynthesis; L-proline biosynthesis; L-glutamate 5-semialdehyde from L-glutamate: step 2/2. Catalyzes the NADPH-dependent reduction of L-glutamate 5-phosphate into L-glutamate 5-semialdehyde and phosphate. The product spontaneously undergoes cyclization to form 1-pyrroline-5-carboxylate. This Thermus thermophilus (strain ATCC BAA-163 / DSM 7039 / HB27) protein is Gamma-glutamyl phosphate reductase.